The sequence spans 409 residues: FBD-associated F-box protein At4g10400 (409 aa).

The F-box domain occupies 1–47; sequence MDRISGLPDEVLVKILSFVPTKVAVSTSILSKRWEFLWMWLTKLKFG. In terms of domain architecture, FBD spans 330–379; the sequence is SWNQPSIVPECMLSSLQKFTWFKYLGRPQDRDIAVYILKNACRLRTATIK.

The polypeptide is FBD-associated F-box protein At4g10400 (Arabidopsis thaliana (Mouse-ear cress)).